A 702-amino-acid polypeptide reads, in one-letter code: Archaeal Lon protease (702 aa).

Residues 1 to 63 (MSNESTNDAP…VGVEGDVSID (63 aa)) are disordered. Over 1–183 (MSNESTNDAP…EARKRNQMRS (183 aa)) the chain is Cytoplasmic. Acidic residues predominate over residues 10–48 (PPDDDPDDPEPSVDHDDTDGLQDDPADSVDDAGEVDDLE). 117-124 (GSPGTGKS) contributes to the ATP binding site. The helical transmembrane segment at 184–201 (FLMWIMILLAVGYALLIA) threads the bilayer. Over 202–206 (TPARP) the chain is Extracellular. Residues 207–223 (LLALLSAAGIYLLFRYT) form a helical membrane-spanning segment. Topologically, residues 224–702 (NRGSDAMVPK…GTTGGNPSPQ (479 aa)) are cytoplasmic. The Lon proteolytic domain occupies 487–667 (EEAVGRVNGL…SEVLDVALVG (181 aa)). Catalysis depends on residues S574 and K617.

The protein belongs to the peptidase S16 family. Archaeal LonB subfamily. As to quaternary structure, homohexamer. Organized in a ring with a central cavity.

The protein resides in the cell membrane. In terms of biological role, ATP-dependent serine protease that mediates the selective degradation of mutant and abnormal proteins as well as certain short-lived regulatory proteins. Degrades polypeptides processively. This is Archaeal Lon protease from Halobacterium salinarum (strain ATCC 700922 / JCM 11081 / NRC-1) (Halobacterium halobium).